The primary structure comprises 389 residues: Probable L-tyrosine/L-aspartate decarboxylase (389 aa).

Lys-233 is modified (N6-(pyridoxal phosphate)lysine).

The protein belongs to the group II decarboxylase family. MfnA subfamily. It depends on pyridoxal 5'-phosphate as a cofactor.

The catalysed reaction is L-tyrosine + H(+) = tyramine + CO2. It carries out the reaction L-aspartate + H(+) = beta-alanine + CO2. Its pathway is cofactor biosynthesis; methanofuran biosynthesis. The protein operates within cofactor biosynthesis; coenzyme A biosynthesis. In terms of biological role, catalyzes the decarboxylation of L-tyrosine to produce tyramine for methanofuran biosynthesis. Can also catalyze the decarboxylation of L-aspartate to produce beta-alanine for coenzyme A (CoA) biosynthesis. This is Probable L-tyrosine/L-aspartate decarboxylase from Methanosphaera stadtmanae (strain ATCC 43021 / DSM 3091 / JCM 11832 / MCB-3).